We begin with the raw amino-acid sequence, 1217 residues long: Myosin-1 (1217 aa).

The segment at 1–26 (MAILKRTNRAKAATAAAPNSTGKSNG) is disordered. Residues 10 to 19 (AKAATAAAPN) are compositionally biased toward low complexity. ATP is bound by residues 17 to 24 (APNSTGKS) and 133 to 140 (GESGAGKT). Positions 40–720 (VGVDDLTLLS…TLFALEDMRD (681 aa)) constitute a Myosin motor domain. Ser361 carries the post-translational modification Phosphoserine. The residue at position 363 (Tyr363) is a Phosphotyrosine. Positions 409–491 (SIGILDIYGF…PGLFAAMNDA (83 aa)) are actin-binding. 2 IQ domains span residues 724–744 (DTMATRIQRAWRSYVRRRSEA) and 745–770 (AACIQKLWNRNKVNMELERVRNEGTK). Ser742 is subject to Phosphoserine. In terms of domain architecture, TH1 spans 778–964 (RRRYSILGSR…TIHVGTGLPP (187 aa)). Ser782 bears the Phosphoserine mark. A disordered region spans residues 961–1105 (GLPPTSKSKP…PPPPPPPAEV (145 aa)). Residues 998–1013 (KPVSMPAAKSKPAPMA) show a composition bias toward low complexity. Polar residues predominate over residues 1015-1025 (PVSTAQQTQNR). The span at 1045–1075 (TSTTTTIKQATTVSASKPAPSTVTSAASSPS) shows a compositional bias: low complexity. Residues 1076-1088 (NISKPSAPVANNV) show a composition bias toward polar residues. The span at 1093–1103 (AVPPPPPPPPA) shows a compositional bias: pro residues. The region spanning 1106 to 1165 (EKKDLYLALYDFAGRSPNEMTIKKDEIIEIVQKEPSGWWLALKNGAEGWVPATYVTEYKG) is the SH3 domain. Residue Ser1211 is modified to Phosphoserine.

The protein belongs to the TRAFAC class myosin-kinesin ATPase superfamily. Myosin family. Interacts with cam2. Interacts (via SH3 domain) with vrp1. Post-translationally, phosphorylation of the TEDS site (Ser-361) is required for the polarization of the actin cytoskeleton. Phosphorylation probably activates the myosin-I ATPase activity.

The protein localises to the cytoplasm. Its subcellular location is the cytoskeleton. It localises to the actin patch. Its function is as follows. Type-I myosin implicated in the organization of the actin cytoskeleton. Required for proper actin cytoskeleton polarization. At the cell cortex, assembles in patch-like structures together with proteins from the actin-polymerizing machinery and promotes actin assembly. Functions as actin nucleation-promoting factor (NPF) for the Arp2/3 complex. Contributes to proper septation by transporting vesicles containing septal material to the division site and is involved in the formation of sterol-rich membrane domains at the cell division site. Required also for mating. In Schizosaccharomyces pombe (strain 972 / ATCC 24843) (Fission yeast), this protein is Myosin-1 (myo1).